The following is a 273-amino-acid chain: Acetyl-coenzyme A carboxylase carboxyl transferase subunit alpha (273 aa).

In terms of domain architecture, CoA carboxyltransferase C-terminal spans 1–244; it reads MKKATQSKAW…KVVLKQALDE (244 aa).

It belongs to the AccA family. Acetyl-CoA carboxylase is a heterohexamer composed of biotin carboxyl carrier protein (AccB), biotin carboxylase (AccC) and two subunits each of ACCase subunit alpha (AccA) and ACCase subunit beta (AccD).

It localises to the cytoplasm. It carries out the reaction N(6)-carboxybiotinyl-L-lysyl-[protein] + acetyl-CoA = N(6)-biotinyl-L-lysyl-[protein] + malonyl-CoA. Its pathway is lipid metabolism; malonyl-CoA biosynthesis; malonyl-CoA from acetyl-CoA: step 1/1. Component of the acetyl coenzyme A carboxylase (ACC) complex. First, biotin carboxylase catalyzes the carboxylation of biotin on its carrier protein (BCCP) and then the CO(2) group is transferred by the carboxyltransferase to acetyl-CoA to form malonyl-CoA. In Acinetobacter baumannii (strain AB0057), this protein is Acetyl-coenzyme A carboxylase carboxyl transferase subunit alpha.